A 183-amino-acid chain; its full sequence is UPF0316 protein EF_1609 (183 aa).

3 consecutive transmembrane segments (helical) span residues 1–21, 35–55, and 62–82; these read MVVDLKMLAMIFIINFAYITL, VIAPLVSMAEITIYVLGLSMV, and PLNLLVYALGYAVGISVGIKI.

Belongs to the UPF0316 family.

The protein localises to the cell membrane. The polypeptide is UPF0316 protein EF_1609 (Enterococcus faecalis (strain ATCC 700802 / V583)).